The primary structure comprises 383 residues: Thioredoxin reductase 2 (383 aa).

Residues 66–69, 87–88, 95–100, N109, V142, C200, D345, and 352–354 each bind FAD; these read SGPA, FE, IAPGGQ, and RQA. The cysteines at positions 197 and 200 are disulfide-linked.

It belongs to the class-II pyridine nucleotide-disulfide oxidoreductase family. Homodimer. It depends on FAD as a cofactor.

It is found in the cytoplasm. The protein resides in the mitochondrion matrix. The catalysed reaction is [thioredoxin]-dithiol + NADP(+) = [thioredoxin]-disulfide + NADPH + H(+). Possesses thioredoxin-disulfide reductase activity towards thioredoxins O1, O2 and F3. The polypeptide is Thioredoxin reductase 2 (NTR2) (Arabidopsis thaliana (Mouse-ear cress)).